The primary structure comprises 720 residues: Phosphoribosylformylglycinamidine synthase subunit PurL (720 aa).

H47 is an active-site residue. The ATP site is built by Y50 and K89. Position 91 (E91) interacts with Mg(2+). Substrate contacts are provided by residues 92-95 (SHNH) and R114. Residue H93 is the Proton acceptor of the active site. A Mg(2+)-binding site is contributed by D115. Q238 contributes to the substrate binding site. D266 serves as a coordination point for Mg(2+). 310-312 (ESQ) is a binding site for substrate. D488 and G525 together coordinate ATP. N526 lines the Mg(2+) pocket. Residue S528 participates in substrate binding.

The protein belongs to the FGAMS family. Monomer. Part of the FGAM synthase complex composed of 1 PurL, 1 PurQ and 2 PurS subunits.

The protein resides in the cytoplasm. It carries out the reaction N(2)-formyl-N(1)-(5-phospho-beta-D-ribosyl)glycinamide + L-glutamine + ATP + H2O = 2-formamido-N(1)-(5-O-phospho-beta-D-ribosyl)acetamidine + L-glutamate + ADP + phosphate + H(+). It functions in the pathway purine metabolism; IMP biosynthesis via de novo pathway; 5-amino-1-(5-phospho-D-ribosyl)imidazole from N(2)-formyl-N(1)-(5-phospho-D-ribosyl)glycinamide: step 1/2. Part of the phosphoribosylformylglycinamidine synthase complex involved in the purines biosynthetic pathway. Catalyzes the ATP-dependent conversion of formylglycinamide ribonucleotide (FGAR) and glutamine to yield formylglycinamidine ribonucleotide (FGAM) and glutamate. The FGAM synthase complex is composed of three subunits. PurQ produces an ammonia molecule by converting glutamine to glutamate. PurL transfers the ammonia molecule to FGAR to form FGAM in an ATP-dependent manner. PurS interacts with PurQ and PurL and is thought to assist in the transfer of the ammonia molecule from PurQ to PurL. The protein is Phosphoribosylformylglycinamidine synthase subunit PurL of Cereibacter sphaeroides (strain KD131 / KCTC 12085) (Rhodobacter sphaeroides).